The following is a 158-amino-acid chain: Small ribosomal subunit protein uS7c (158 aa).

It belongs to the universal ribosomal protein uS7 family. As to quaternary structure, part of the 30S ribosomal subunit.

It is found in the plastid. The protein localises to the chloroplast. Its function is as follows. One of the primary rRNA binding proteins, it binds directly to 16S rRNA where it nucleates assembly of the head domain of the 30S subunit. The sequence is that of Small ribosomal subunit protein uS7c (rps7) from Trieres chinensis (Marine centric diatom).